A 315-amino-acid polypeptide reads, in one-letter code: Glycine--tRNA ligase alpha subunit (315 aa).

This sequence belongs to the class-II aminoacyl-tRNA synthetase family. In terms of assembly, tetramer of two alpha and two beta subunits.

It localises to the cytoplasm. It catalyses the reaction tRNA(Gly) + glycine + ATP = glycyl-tRNA(Gly) + AMP + diphosphate. This Ectopseudomonas mendocina (strain ymp) (Pseudomonas mendocina) protein is Glycine--tRNA ligase alpha subunit.